We begin with the raw amino-acid sequence, 434 residues long: Putative DD-carboxypeptidase TP_0574 (434 aa).

Positions 1–19 are cleaved as a signal peptide; it reads MKVKYALLSAGALQLLVVG. Cys-20 is lipidated: N-palmitoyl cysteine. Residue Cys-20 is the site of S-diacylglycerol cysteine attachment.

In terms of assembly, probably a monomer; a non-lipidated construct (residues 22-434) is monomeric in solution but crystallizes as a homodimer. Requires Zn(2+) as cofactor. In terms of processing, the N-terminus is blocked. Present as a doublet of low abundance 48 kDa and high abundance 47 kDa proteins. The longer form is probably due to readthrough of the stop codon; the extra amino acids at the C-terminus would be X-Lys-Arg-Gly-Val-Leu-Ser-Arg-Val-Ser, a peptide antibody against this sequence detects only the 48 kDa form.

It is found in the cell inner membrane. Functionally, a possible D,D-carboxypeptidase, that releases amino acids sequentially from a proteins C-terminus. Has zinc-dependent carboxypeptidase activity on synthetic depsipeptide substrates. May serve to decrease cross-linking of peptidoglycan, promoting the highly sinusous motility of this spirochaete. Overexpression of the whole protein in E.coli leads to aberrant cell morphology and extrusion of the cytoplasm, while overexpression of a construct with the first 62 resides of the protein fused to PhoA does have this effect, suggesting the whole protein, not the lipoprotein moiety, is toxic. Binds penicillin. Penicillin binding is covalent, does not require lipidation, and is zinc-dependent. While this protein has beta-lactamase activity in vitro, that is probably not its role in vivo, as T.pallidum is very sensitive to penicillin antibiotics. In terms of biological role, a pathogen-specific membrane antigen. Most abundant of the membrane lipoproteins, only found in pathogenic treponemes, suggesting that it is an important structural moiety in the cell envelope of virulent treponemal subspecies. A lipopeptide corresponding to the first 6 mature residues induces host (human and mouse) cytokine release by monocyte cell lines via TLR2 and CD14; nonlipidated protein does not stimulate host cells. Stimulates host (human) dendritic cell maturation to become MHC class II-positive antigen presenting cells via TLR2, which depends on lipidation; nonlipidated protein does not stimulate maturation. The chain is Putative DD-carboxypeptidase TP_0574 from Treponema pallidum (strain Nichols).